Consider the following 205-residue polypeptide: MSAYRKGNIFIISAASGTGKTTLVSRLLANHNGLRVSVSHTTRPPREGEANGVHYHFVSKEEFESLIAQEAFLEYADVFGNYYGTSTEGVNALAAAGYDVILEIDVQGAAQVRNALPEAVGIFILPPSFDVLAARLKGRGTDSREVIQRRLSKARHEIEQSVLFDFVVVNDDLEKAEGDLLHIVNACRLKRSRQLGFIADLLENS.

Positions 7–185 (GNIFIISAAS…AEGDLLHIVN (179 aa)) constitute a Guanylate kinase-like domain. An ATP-binding site is contributed by 14–21 (AASGTGKT).

Belongs to the guanylate kinase family.

The protein localises to the cytoplasm. It catalyses the reaction GMP + ATP = GDP + ADP. Essential for recycling GMP and indirectly, cGMP. This chain is Guanylate kinase, found in Neisseria gonorrhoeae (strain ATCC 700825 / FA 1090).